The primary structure comprises 363 residues: Anhydro-N-acetylmuramic acid kinase (363 aa).

An ATP-binding site is contributed by 10–17; that stretch reads GTSLDGMD.

It belongs to the anhydro-N-acetylmuramic acid kinase family.

It carries out the reaction 1,6-anhydro-N-acetyl-beta-muramate + ATP + H2O = N-acetyl-D-muramate 6-phosphate + ADP + H(+). It functions in the pathway amino-sugar metabolism; 1,6-anhydro-N-acetylmuramate degradation. Its pathway is cell wall biogenesis; peptidoglycan recycling. Functionally, catalyzes the specific phosphorylation of 1,6-anhydro-N-acetylmuramic acid (anhMurNAc) with the simultaneous cleavage of the 1,6-anhydro ring, generating MurNAc-6-P. Is required for the utilization of anhMurNAc either imported from the medium or derived from its own cell wall murein, and thus plays a role in cell wall recycling. Contributes to intrinsic fosfomycin resistance in P.aeruginosa. This Pseudomonas aeruginosa (strain ATCC 15692 / DSM 22644 / CIP 104116 / JCM 14847 / LMG 12228 / 1C / PRS 101 / PAO1) protein is Anhydro-N-acetylmuramic acid kinase.